Consider the following 140-residue polypeptide: Large ribosomal subunit protein bL17 (140 aa).

It belongs to the bacterial ribosomal protein bL17 family. In terms of assembly, part of the 50S ribosomal subunit. Contacts protein L32.

The chain is Large ribosomal subunit protein bL17 from Rhizobium johnstonii (strain DSM 114642 / LMG 32736 / 3841) (Rhizobium leguminosarum bv. viciae).